The following is a 528-amino-acid chain: O-methylsterigmatocystin oxidoreductase (528 aa).

C440 is a binding site for heme.

The protein belongs to the cytochrome P450 family. Heme serves as cofactor.

It catalyses the reaction 8-O-methylsterigmatocystin + 2 reduced [NADPH--hemoprotein reductase] + 2 O2 = aflatoxin B1 + methanol + 2 oxidized [NADPH--hemoprotein reductase] + CO2 + H2O + 2 H(+). The enzyme catalyses 8-O-methyldihydrosterigmatocystin + 2 reduced [NADPH--hemoprotein reductase] + 2 O2 = aflatoxin B2 + methanol + 2 oxidized [NADPH--hemoprotein reductase] + CO2 + H2O + 2 H(+). It participates in mycotoxin biosynthesis; aflatoxin biosynthesis. Functionally, converts O-methylsterigmatocystin (OMST) to aflatoxin B1 and converts dihydro-O-methylsterigmatocystin (DHOMST) to aflatoxin B2 in the aflatoxin biosynthesis pathway. The polypeptide is O-methylsterigmatocystin oxidoreductase (ordA) (Aspergillus flavus).